The primary structure comprises 81 residues: MKLTCVLIVALLFLTACQLTTADDSRDKQEDPLVRSHRKMQKSEDPKMAERCSNFGSDCIPATHDCCSGECFGFEDMGLCT.

Positions Met-1 to Ala-22 are cleaved as a signal peptide. Basic and acidic residues predominate over residues Asp-23 to Val-34. The disordered stretch occupies residues Asp-23–Asp-45. A propeptide spanning residues Asp-23–Arg-51 is cleaved from the precursor. 3 disulfide bridges follow: Cys-52-Cys-67, Cys-59-Cys-71, and Cys-66-Cys-80.

Belongs to the conotoxin O1 superfamily. Expressed by the venom duct.

The protein localises to the secreted. This chain is Conotoxin ArMKLT2-0311, found in Conus arenatus (Sand-dusted cone).